The primary structure comprises 143 residues: Large ribosomal subunit protein uL15 (143 aa).

The disordered stretch occupies residues 1 to 51; that stretch reads MELNTIKPASGAKHAKRRVGRGIGSGLGKTAGRGHKGQKSRAGGYHKVGFE. Residues 21 to 31 show a composition bias toward gly residues; sequence RGIGSGLGKTA.

It belongs to the universal ribosomal protein uL15 family. Part of the 50S ribosomal subunit.

In terms of biological role, binds to the 23S rRNA. This Methylibium petroleiphilum (strain ATCC BAA-1232 / LMG 22953 / PM1) protein is Large ribosomal subunit protein uL15.